Here is a 417-residue protein sequence, read N- to C-terminus: UPF0761 membrane protein Daci_4966 (417 aa).

A run of 6 helical transmembrane segments spans residues 49–69 (VLAL…FPIF), 106–126 (QLGM…ILTI), 146–166 (VLIY…SLVL), 187–207 (FIFD…LYHY), 235–255 (ALGL…TFAT), and 256–276 (LPIL…GAVV).

Belongs to the UPF0761 family.

The protein localises to the cell inner membrane. The protein is UPF0761 membrane protein Daci_4966 of Delftia acidovorans (strain DSM 14801 / SPH-1).